A 417-amino-acid polypeptide reads, in one-letter code: Dibenzothiophene monooxygenase (417 aa).

Positions 19 to 125 are helical N-terminus; that stretch reads DPVAVARGLA…LYTQIAQNNW (107 aa). FMN-binding positions include Y96, 129–134, 159–163, R282, 369–370, and H391; these read NASSEN, KHFCS, and AR. The segment at 126-234 is central beta-barrel N-terminus; that stretch reads WTGNASSENN…VEPDEVLGAP (109 aa). A lid loop region spans residues 131–142; it reads SSENNSHELDVK. Positions 235 to 409 are helical C-terminus; that stretch reads NAFVLAFIQS…DVGKHTLNGQ (175 aa).

This sequence belongs to the DszC flavin monooxygenase family. Homotetramer.

It localises to the cytoplasm. It catalyses the reaction dibenzothiophene + 2 FMNH2 + 2 O2 = dibenzothiophene 5,5-dioxide + 2 FMN + 2 H2O + 2 H(+). The catalysed reaction is dibenzothiophene + FMNH2 + O2 = dibenzothiophene 5-oxide + FMN + H2O + H(+). It carries out the reaction dibenzothiophene 5-oxide + FMNH2 + O2 = dibenzothiophene 5,5-dioxide + FMN + H2O + H(+). It participates in sulfur metabolism; dibenzothiophene degradation. Catalyzes the first step of the '4S' desulfurization pathway that removes covalently bound sulfur from dibenzothiophene (DBT) without breaking carbon-carbon bonds. Sulfur dioxygenase which converts DBT to DBT-sulfone (DBTO2 or DBT 5,5-dioxide) in a stepwise manner. In Rhodococcus erythropolis (Arthrobacter picolinophilus), this protein is Dibenzothiophene monooxygenase.